Reading from the N-terminus, the 526-residue chain is PTS system alpha-glucoside-specific EIICB component (526 aa).

Positions 1 to 417 (MLKHFQRLGG…YNVKTSGRED (417 aa)) constitute a PTS EIIC type-1 domain. A run of 12 helical transmembrane segments spans residues 12–32 (LFAP…TIIL), 59–79 (GWTV…IGLA), 88–108 (LAVL…LTFW), 132–152 (IKTL…TIYI), 173–193 (LVSA…CLVW), 200–220 (ISSL…LYTF), 224–244 (ILIP…GPAV), 274–294 (GGFA…ALAM), 305–325 (IVSG…ITEP), 330–350 (FLFI…TMAA), 355–375 (FGVV…WLPL), and 381–401 (GVMF…YLVF). Residues 447–526 (SGKAKAFLEA…ESFENLMEQN (80 aa)) enclose the PTS EIIB type-1 domain. The active-site Phosphocysteine intermediate; for EIIB activity is C469.

It is found in the cell membrane. Functionally, the phosphoenolpyruvate-dependent sugar phosphotransferase system (sugar PTS), a major carbohydrate active -transport system, catalyzes the phosphorylation of incoming sugar substrates concomitantly with their translocation across the cell membrane. This system is involved in alpha-glucoside transport. This Fusobacterium mortiferum protein is PTS system alpha-glucoside-specific EIICB component (malB).